We begin with the raw amino-acid sequence, 126 residues long: Small ribosomal subunit protein uS12m (126 aa).

Disordered stretches follow at residues 1–27 and 106–126; these read MPTM…LNKC and GIPG…KDYI. Composition is skewed to basic residues over residues 12–23 and 109–120; these read RESKRRTKRTRA and GRRRGRSKYGTK.

It belongs to the universal ribosomal protein uS12 family.

It localises to the mitochondrion. Functionally, protein S12 is involved in the translation initiation step. The polypeptide is Small ribosomal subunit protein uS12m (RPS12) (Marchantia polymorpha (Common liverwort)).